The sequence spans 344 residues: RNA 3'-terminal phosphate cyclase (344 aa).

ATP-binding positions include Gln102 and 284–288 (FLGDQ). His308 acts as the Tele-AMP-histidine intermediate in catalysis.

Belongs to the RNA 3'-terminal cyclase family. Type 1 subfamily.

It is found in the cytoplasm. It carries out the reaction a 3'-end 3'-phospho-ribonucleotide-RNA + ATP = a 3'-end 2',3'-cyclophospho-ribonucleotide-RNA + AMP + diphosphate. Its function is as follows. Catalyzes the conversion of 3'-phosphate to a 2',3'-cyclic phosphodiester at the end of RNA. The mechanism of action of the enzyme occurs in 3 steps: (A) adenylation of the enzyme by ATP; (B) transfer of adenylate to an RNA-N3'P to produce RNA-N3'PP5'A; (C) and attack of the adjacent 2'-hydroxyl on the 3'-phosphorus in the diester linkage to produce the cyclic end product. The biological role of this enzyme is unknown but it is likely to function in some aspects of cellular RNA processing. This is RNA 3'-terminal phosphate cyclase from Thermococcus gammatolerans (strain DSM 15229 / JCM 11827 / EJ3).